Here is a 698-residue protein sequence, read N- to C-terminus: Long-chain-fatty-acid--CoA ligase 1 (698 aa).

Methionine 1 is modified (N-acetylmethionine). A 3'-nitrotyrosine modification is found at tyrosine 9. Residues 25 to 45 (LPTNTLMGFGAFAALTTFWYA) traverse the membrane as a helical; Signal-anchor for type III membrane protein segment. At 46 to 698 (TRPKPLKPPC…IDDLYSTIKV (653 aa)) the chain is on the cytoplasmic side. Tyrosine 84 carries the post-translational modification Phosphotyrosine. Serine 135 is a glycosylation site (O-linked (GlcNAc) serine). N6-acetyllysine is present on residues lysine 207, lysine 356, and lysine 386. A Phosphoserine modification is found at serine 620. Lysine 632 bears the N6-acetyllysine mark.

This sequence belongs to the ATP-dependent AMP-binding enzyme family. Mg(2+) is required as a cofactor. Highly expressed in liver, heart, skeletal muscle, kidney and erythroid cells, and to a lesser extent in brain, lung, placenta and pancreas.

It localises to the mitochondrion outer membrane. Its subcellular location is the peroxisome membrane. It is found in the microsome membrane. The protein resides in the endoplasmic reticulum membrane. The enzyme catalyses a long-chain fatty acid + ATP + CoA = a long-chain fatty acyl-CoA + AMP + diphosphate. The catalysed reaction is (5Z,8Z,11Z,14Z)-eicosatetraenoate + ATP + CoA = (5Z,8Z,11Z,14Z)-eicosatetraenoyl-CoA + AMP + diphosphate. It catalyses the reaction 3,7,11,15-tetramethylhexadecanoate + ATP + CoA = phytanoyl-CoA + AMP + diphosphate. It carries out the reaction hexadecanoate + ATP + CoA = hexadecanoyl-CoA + AMP + diphosphate. The enzyme catalyses (E)-hexadec-2-enoate + ATP + CoA = (2E)-hexadecenoyl-CoA + AMP + diphosphate. The catalysed reaction is 2,6,10,14-tetramethylpentadecanoate + ATP + CoA = pristanoyl-CoA + AMP + diphosphate. It catalyses the reaction 14,15-epoxy-(5Z,8Z,11Z)-eicosatrienoate + ATP + CoA = 14,15-epoxy-(5Z,8Z,11Z)-eicosatrienoyl-CoA + AMP + diphosphate. It carries out the reaction 5-hydroxy-(6E,8Z,11Z,14Z)-eicosatetraenoate + ATP + CoA = 5-hydroxy-(6E,8Z,11Z,14Z)-eicosatetraenoyl-CoA + AMP + diphosphate. The enzyme catalyses 12-hydroxy-(5Z,8Z,10E,14Z)-eicosatetraenoate + ATP + CoA = 12-hydroxy-(5Z,8Z,10E,14Z)-eicosatetraenoyl-CoA + AMP + diphosphate. The catalysed reaction is 15-hydroxy-(5Z,8Z,11Z,13E)-eicosatetraenoate + ATP + CoA = 15-hydroxy-(5Z,8Z,11Z,13E)-eicosatetraenoyl-CoA + AMP + diphosphate. It catalyses the reaction (9Z)-octadecenoate + ATP + CoA = (9Z)-octadecenoyl-CoA + AMP + diphosphate. Its activity is regulated as follows. Inhibited at high temperature and by arachidonate. Functionally, catalyzes the conversion of long-chain fatty acids to their active form acyl-CoAs for both synthesis of cellular lipids, and degradation via beta-oxidation. Preferentially uses palmitoleate, oleate and linoleate. Preferentially activates arachidonate than epoxyeicosatrienoic acids (EETs) or hydroxyeicosatrienoic acids (HETEs). The protein is Long-chain-fatty-acid--CoA ligase 1 of Homo sapiens (Human).